A 345-amino-acid chain; its full sequence is Selenide, water dikinase (345 aa).

Cys-15 is an active-site residue. ATP contacts are provided by residues Lys-18 and 46 to 48 (SKD). Residue Asp-49 coordinates Mg(2+). Residues Asp-66, Asp-89, and 137-139 (GHS) contribute to the ATP site. Asp-89 is a Mg(2+) binding site. Asp-225 is a binding site for Mg(2+).

The protein belongs to the selenophosphate synthase 1 family. Class I subfamily. Homodimer. It depends on Mg(2+) as a cofactor.

It catalyses the reaction hydrogenselenide + ATP + H2O = selenophosphate + AMP + phosphate + 2 H(+). Synthesizes selenophosphate from selenide and ATP. The protein is Selenide, water dikinase of Aeromonas salmonicida (strain A449).